The chain runs to 375 residues: Proclotting enzyme (375 aa).

A signal peptide spans methionine 1–cysteine 21. Residues serine 22–glutamine 27 constitute a propeptide that is removed on maturation. Position 30 is a pyrrolidone carboxylic acid (glutamine 30). Residues leucine 39–cysteine 84 form the Clip domain. Cystine bridges form between cysteine 40–cysteine 83, cysteine 50–cysteine 73, and cysteine 56–cysteine 84. Positions valine 90–asparagine 113 are disordered. Intrachain disulfides connect cysteine 118–cysteine 248, cysteine 157–cysteine 173, cysteine 295–cysteine 311, and cysteine 322–cysteine 351. Residue asparagine 122 is glycosylated (N-linked (GlcNAc...) asparagine). Positions isoleucine 128–valine 375 constitute a Peptidase S1 domain. Histidine 172 serves as the catalytic Charge relay system. Residues glutamate 194, asparagine 196, serine 199, and aspartate 202 each coordinate Ca(2+). Catalysis depends on aspartate 228, which acts as the Charge relay system. N-linked (GlcNAc...) asparagine glycosylation is found at asparagine 235 and asparagine 304. Serine 326 functions as the Charge relay system in the catalytic mechanism.

The protein belongs to the peptidase S1 family. CLIP subfamily. In the active form, heterodimer of a light chain and a heavy chain; disulfide-linked. Forms a covalent heterodimer with intracellular coagulation inhibitor 2/LICI-2. In terms of processing, proteolytically cleaved into its mature active form by serine protease factor B. Cleavage produces a 25 kDa light chain containing the CLIP domain and a catalytic 31 kDa heavy chain which remain covalently associated through an interchain disulfide bond. Proteolytically cleaved by clotting factor G subunit beta. Contains six O-linked carbohydrate chains in the N-terminal light chain. Expressed in hemocytes (at protein level).

The protein resides in the cytoplasmic vesicle. It localises to the secretory vesicle. It is found in the secreted. It carries out the reaction Selective cleavage of 18-Arg-|- and 47-Arg-|- bonds in coagulogen to form coagulin and fragments.. With respect to regulation, inhibited by intracellular coagulation inhibitor 2/LICI-2 and to a lesser extent by intracellular coagulation inhibitor 3/LICI-3. Its function is as follows. This enzyme is closely associated with an endotoxin-sensitive hemolymph coagulation system in limulus. Its active form catalyzes the conversion of coagulogen to insoluble coagulin gel. The protein is Proclotting enzyme of Tachypleus tridentatus (Japanese horseshoe crab).